We begin with the raw amino-acid sequence, 424 residues long: Serine--tRNA ligase (424 aa).

230–232 (TAE) lines the L-serine pocket. 261 to 263 (RSE) is a binding site for ATP. An L-serine-binding site is contributed by glutamate 284. Residue 348-351 (EISS) coordinates ATP. Serine 384 contributes to the L-serine binding site.

The protein belongs to the class-II aminoacyl-tRNA synthetase family. Type-1 seryl-tRNA synthetase subfamily. In terms of assembly, homodimer. The tRNA molecule binds across the dimer.

The protein localises to the cytoplasm. It catalyses the reaction tRNA(Ser) + L-serine + ATP = L-seryl-tRNA(Ser) + AMP + diphosphate + H(+). It carries out the reaction tRNA(Sec) + L-serine + ATP = L-seryl-tRNA(Sec) + AMP + diphosphate + H(+). It participates in aminoacyl-tRNA biosynthesis; selenocysteinyl-tRNA(Sec) biosynthesis; L-seryl-tRNA(Sec) from L-serine and tRNA(Sec): step 1/1. Functionally, catalyzes the attachment of serine to tRNA(Ser). Is also able to aminoacylate tRNA(Sec) with serine, to form the misacylated tRNA L-seryl-tRNA(Sec), which will be further converted into selenocysteinyl-tRNA(Sec). The polypeptide is Serine--tRNA ligase (Streptococcus pneumoniae serotype 19F (strain G54)).